The sequence spans 329 residues: Malate dehydrogenase (329 aa).

Residue Gly12–Gly18 participates in NAD(+) binding. Substrate-binding residues include Arg95 and Arg101. NAD(+) is bound by residues Asn108, Gln115, and Val132–Asn134. Asn134 and Arg165 together coordinate substrate. The active-site Proton acceptor is the His190.

Belongs to the LDH/MDH superfamily. MDH type 2 family. In terms of assembly, homodimer.

The catalysed reaction is (S)-malate + NAD(+) = oxaloacetate + NADH + H(+). With respect to regulation, substrate inhibition is observed at high concentrations of oxaloacetate. Its function is as follows. Catalyzes the reversible oxidation of malate to oxaloacetate. Catalyzes the reduction of oxaloacetate more efficiently than the oxidation of malate. The sequence is that of Malate dehydrogenase from Syntrophobacter fumaroxidans (strain DSM 10017 / MPOB).